The primary structure comprises 335 residues: HTH-type transcriptional regulator LacR (335 aa).

Residues 1–58 (MRTIKEIALESGYSPATVSRLLNNDPNLSITADTKNKILEIANKLGYWEDHQEKKIKP) enclose the HTH lacI-type domain. Residues 4-23 (IKEIALESGYSPATVSRLLN) constitute a DNA-binding region (H-T-H motif).

Its pathway is carbohydrate metabolism; lactose degradation [regulation]. Negatively regulates the transcription of the lactose utilization genes lacL and lacM. This is HTH-type transcriptional regulator LacR (lacR) from Lactobacillus helveticus (Lactobacillus suntoryeus).